Consider the following 339-residue polypeptide: Phenylalanine--tRNA ligase alpha subunit (339 aa).

Mg(2+) is bound at residue E254.

This sequence belongs to the class-II aminoacyl-tRNA synthetase family. Phe-tRNA synthetase alpha subunit type 1 subfamily. As to quaternary structure, tetramer of two alpha and two beta subunits. The cofactor is Mg(2+).

The protein localises to the cytoplasm. It carries out the reaction tRNA(Phe) + L-phenylalanine + ATP = L-phenylalanyl-tRNA(Phe) + AMP + diphosphate + H(+). This chain is Phenylalanine--tRNA ligase alpha subunit, found in Clostridium beijerinckii (strain ATCC 51743 / NCIMB 8052) (Clostridium acetobutylicum).